The following is an 800-amino-acid chain: Fibroblast growth factor receptor 3 (800 aa).

Positions 1-20 (MVPLCLLLYLATLVFPPVYS) are cleaved as a signal peptide. The region spanning 21–122 (AHLLSPEPTD…YTVKVIDSLS (102 aa)) is the Ig-like C2-type 1 domain. Over 21-363 (AHLLSPEPTD…EMEREDDYAD (343 aa)) the chain is Extracellular. Cysteines 55 and 101 form a disulfide. N-linked (GlcNAc...) asparagine glycans are attached at residues N77, N90, and N112. Acidic residues predominate over residues 124 to 136 (GDDEDYDEDEDEA). Residues 124-143 (GDDEDYDEDEDEAGNGNAEA) form a disordered region. Ig-like C2-type domains follow at residues 144-237 (PYWT…YQLD) and 246-348 (PILQ…AWLT). A disulfide bridge links C169 with C221. N218, N255, N287, N308, and N321 each carry an N-linked (GlcNAc...) asparagine glycan. Residues C268 and C332 are joined by a disulfide bond. The helical transmembrane segment at 364–384 (ILIYVTSCVLFILTMVIIILC) threads the bilayer. The Cytoplasmic portion of the chain corresponds to 385–800 (RMWINTQKTL…HHHSNGVIRT (416 aa)). The Protein kinase domain occupies 460–739 (LTLGKPLGEG…RQLVEDHDRV (280 aa)). Residues 466 to 474 (LGEGCFGQV) and K496 each bind ATP. The active-site Proton acceptor is D605. A phosphotyrosine; by autocatalysis mark is found at Y635, Y636, Y712, and Y748. A compositionally biased stretch (polar residues) spans 764-773 (DSNSTCSSGD). The interval 764-800 (DSNSTCSSGDDSVFAHDPLPEEPCLPKHHHSNGVIRT) is disordered.

Belongs to the protein kinase superfamily. Tyr protein kinase family. Fibroblast growth factor receptor subfamily. As to quaternary structure, monomer. Homodimer after ligand binding. In terms of processing, autophosphorylated. Binding of FGF family members together with heparan sulfate proteoglycan or heparin promotes receptor dimerization and autophosphorylation on tyrosine residues. Autophosphorylation occurs in trans between the two FGFR molecules present in the dimer.

Its subcellular location is the cell membrane. It catalyses the reaction L-tyrosyl-[protein] + ATP = O-phospho-L-tyrosyl-[protein] + ADP + H(+). Present in an inactive conformation in the absence of bound ligand. Ligand binding leads to dimerization and activation by autophosphorylation on tyrosine residues. Tyrosine-protein kinase that acts as a cell-surface receptor for fibroblast growth factors and plays an essential role in the regulation of cell proliferation, differentiation and apoptosis. Plays an essential role in the regulation of chondrocyte differentiation, proliferation and apoptosis, and is required for normal skeleton development. Regulates both osteogenesis and postnatal bone mineralization by osteoblasts. Promotes apoptosis in chondrocytes, but can also promote cancer cell proliferation. Phosphorylates PLCG1, CBL and FRS2. Ligand binding leads to the activation of several signaling cascades. Activation of PLCG1 leads to the production of the cellular signaling molecules diacylglycerol and inositol 1,4,5-trisphosphate. Phosphorylation of FRS2 triggers recruitment of GRB2, GAB1, PIK3R1 and SOS1, and mediates activation of RAS, MAPK1/ERK2, MAPK3/ERK1 and the MAP kinase signaling pathway, as well as of the AKT1 signaling pathway. The chain is Fibroblast growth factor receptor 3 (fgfr3) from Danio rerio (Zebrafish).